Reading from the N-terminus, the 391-residue chain is Acetate kinase (391 aa).

Position 7 (Asn-7) interacts with Mg(2+). Lys-14 contributes to the ATP binding site. Arg-88 provides a ligand contact to substrate. Asp-145 serves as the catalytic Proton donor/acceptor. ATP contacts are provided by residues 203–207 (HAGNG), 278–280 (DAR), and 326–330 (GMGEN). Mg(2+) is bound at residue Glu-378.

This sequence belongs to the acetokinase family. As to quaternary structure, homodimer. Mg(2+) is required as a cofactor. The cofactor is Mn(2+).

It localises to the cytoplasm. It catalyses the reaction acetate + ATP = acetyl phosphate + ADP. It functions in the pathway metabolic intermediate biosynthesis; acetyl-CoA biosynthesis; acetyl-CoA from acetate: step 1/2. Catalyzes the formation of acetyl phosphate from acetate and ATP. Can also catalyze the reverse reaction. This is Acetate kinase from Phytoplasma mali (strain AT).